Here is a 406-residue protein sequence, read N- to C-terminus: Formate-dependent phosphoribosylglycinamide formyltransferase (406 aa).

Residues 27-28 (EL) and glutamate 87 contribute to the N(1)-(5-phospho-beta-D-ribosyl)glycinamide site. Residues arginine 120, lysine 162, 167–172 (SSGKGQ), 202–205 (EGFI), and glutamate 210 each bind ATP. The 196-residue stretch at 125 to 320 (RLAAETLGLP…EFELHARALL (196 aa)) folds into the ATP-grasp domain. 2 residues coordinate Mg(2+): glutamate 279 and glutamate 291. N(1)-(5-phospho-beta-D-ribosyl)glycinamide contacts are provided by residues aspartate 298, lysine 367, and 374 to 375 (RR).

The protein belongs to the PurK/PurT family. As to quaternary structure, homodimer.

It catalyses the reaction N(1)-(5-phospho-beta-D-ribosyl)glycinamide + formate + ATP = N(2)-formyl-N(1)-(5-phospho-beta-D-ribosyl)glycinamide + ADP + phosphate + H(+). Its pathway is purine metabolism; IMP biosynthesis via de novo pathway; N(2)-formyl-N(1)-(5-phospho-D-ribosyl)glycinamide from N(1)-(5-phospho-D-ribosyl)glycinamide (formate route): step 1/1. Its function is as follows. Involved in the de novo purine biosynthesis. Catalyzes the transfer of formate to 5-phospho-ribosyl-glycinamide (GAR), producing 5-phospho-ribosyl-N-formylglycinamide (FGAR). Formate is provided by PurU via hydrolysis of 10-formyl-tetrahydrofolate. This Bordetella bronchiseptica (strain ATCC BAA-588 / NCTC 13252 / RB50) (Alcaligenes bronchisepticus) protein is Formate-dependent phosphoribosylglycinamide formyltransferase.